A 340-amino-acid chain; its full sequence is MEWCCALSGLLPEEIQKVCAFAERFRGVQVFRWIAAGCTDFHAMSDLSSETRARLARACVISDTRVYTTLRDVDGTLKLGIELKDKRRVEAVLLVDQVSRKTACLSCQVGCPMACAFCQTGQLGFARNLSASEIVEQFLHLERCVGTLDNVVFMGMGEPMLNLDAVCRAIEILSHPQGRDLSEKRITISTSGHCRGIYSLADRALQVRLAVSLTTANAPLRARLMPRAAHDSLAKLKSAIRYFNEKSGKRVTLELALMRGVNTSERHAQEVIDFAHGLNVHVNLIPWNPVASIHFETPREVEVAHFEALLMRARIPVTRRYQRGNGIGGACGQLGKTAGV.

E90 functions as the Proton acceptor in the catalytic mechanism. The Radical SAM core domain maps to 97 to 325 (QVSRKTACLS…PVTRRYQRGN (229 aa)). C104 and C331 form a disulfide bridge. Residues C111, C115, and C118 each contribute to the [4Fe-4S] cluster site. S-adenosyl-L-methionine is bound by residues 157 to 158 (GE), S189, 212 to 214 (SLT), and N288. Catalysis depends on C331, which acts as the S-methylcysteine intermediate.

The protein belongs to the radical SAM superfamily. RlmN family. [4Fe-4S] cluster is required as a cofactor.

Its subcellular location is the cytoplasm. It catalyses the reaction adenosine(2503) in 23S rRNA + 2 reduced [2Fe-2S]-[ferredoxin] + 2 S-adenosyl-L-methionine = 2-methyladenosine(2503) in 23S rRNA + 5'-deoxyadenosine + L-methionine + 2 oxidized [2Fe-2S]-[ferredoxin] + S-adenosyl-L-homocysteine. The catalysed reaction is adenosine(37) in tRNA + 2 reduced [2Fe-2S]-[ferredoxin] + 2 S-adenosyl-L-methionine = 2-methyladenosine(37) in tRNA + 5'-deoxyadenosine + L-methionine + 2 oxidized [2Fe-2S]-[ferredoxin] + S-adenosyl-L-homocysteine. Functionally, specifically methylates position 2 of adenine 2503 in 23S rRNA and position 2 of adenine 37 in tRNAs. This chain is Probable dual-specificity RNA methyltransferase RlmN, found in Treponema pallidum (strain Nichols).